Consider the following 173-residue polypeptide: NADH-quinone oxidoreductase subunit B 1 (173 aa).

[4Fe-4S] cluster contacts are provided by Cys42, Cys43, Cys107, and Cys137.

The protein belongs to the complex I 20 kDa subunit family. In terms of assembly, NDH-1 is composed of 14 different subunits. Subunits NuoB, C, D, E, F, and G constitute the peripheral sector of the complex. The cofactor is [4Fe-4S] cluster.

It is found in the cell inner membrane. It catalyses the reaction a quinone + NADH + 5 H(+)(in) = a quinol + NAD(+) + 4 H(+)(out). In terms of biological role, NDH-1 shuttles electrons from NADH, via FMN and iron-sulfur (Fe-S) centers, to quinones in the respiratory chain. The immediate electron acceptor for the enzyme in this species is believed to be ubiquinone. Couples the redox reaction to proton translocation (for every two electrons transferred, four hydrogen ions are translocated across the cytoplasmic membrane), and thus conserves the redox energy in a proton gradient. The protein is NADH-quinone oxidoreductase subunit B 1 of Anaeromyxobacter sp. (strain K).